We begin with the raw amino-acid sequence, 520 residues long: Cytochrome P450 monooxygenase 176 (520 aa).

Asn6 carries an N-linked (GlcNAc...) asparagine glycan. A helical transmembrane segment spans residues 10-27; it reads LLVVAGALFLTFLTTRFI. Asn141 and Asn270 each carry an N-linked (GlcNAc...) asparagine glycan. Cys445 serves as a coordination point for heme. Asn517 carries an N-linked (GlcNAc...) asparagine glycan.

It belongs to the cytochrome P450 family. Heme is required as a cofactor.

It is found in the membrane. The protein operates within secondary metabolite biosynthesis. Its function is as follows. Cytochrome P450 monooxygenase that is able to use delta(6)-protoilludene as a substrate to produce delta(6)-protoilludene-5-ol and an unidentified hydroxyprotoilludene. Is also able to use phenanthrene as a substrate for oxidation. The chain is Cytochrome P450 monooxygenase 176 from Postia placenta (strain ATCC 44394 / Madison 698-R) (Brown rot fungus).